A 106-amino-acid chain; its full sequence is UPF0145 protein CTC_01500 (106 aa).

The protein belongs to the UPF0145 family.

The chain is UPF0145 protein CTC_01500 from Clostridium tetani (strain Massachusetts / E88).